Reading from the N-terminus, the 348-residue chain is Centromere protein N-A (348 aa).

Belongs to the CENP-N/CHL4 family.

It is found in the nucleus. It localises to the chromosome. The protein localises to the centromere. In terms of biological role, probable component of a centromeric complex involved in assembly of kinetochore proteins, mitotic progression and chromosome segregation. This is Centromere protein N-A (cenpn-a) from Xenopus laevis (African clawed frog).